The following is a 166-amino-acid chain: Phospholipase A2 inhibitor (166 aa).

The signal sequence occupies residues 1-19; that stretch reads MRLILLSGLLLLGIFLANG. The C-type lectin domain maps to 46–161; it reads LKGSFLIVHK…CDDNLLVVCE (116 aa). Disulfide bonds link cysteine 83/cysteine 160 and cysteine 138/cysteine 152. Asparagine 122 carries N-linked (GlcNAc...) asparagine glycosylation.

This sequence belongs to the alpha-type phospholipase A2 inhibitor family. In terms of assembly, homotrimer; non-covalently linked. Expressed by the liver.

It is found in the secreted. In terms of biological role, this phospholipase A2 inhibitor binds directly phospholipase A2 in the presence or absence of calcium. In Bothrops jararacussu (Jararacussu), this protein is Phospholipase A2 inhibitor.